A 338-amino-acid polypeptide reads, in one-letter code: Ketol-acid reductoisomerase (NADP(+)) (338 aa).

A KARI N-terminal Rossmann domain is found at 1–181; the sequence is MNVYYDKDCD…GGGRSGIIET (181 aa). NADP(+) is bound by residues 24-27, R47, S50, S52, and 82-85; these read YGSQ and DEFQ. Residue H107 is part of the active site. Position 133 (G133) interacts with NADP(+). The KARI C-terminal knotted domain occupies 182-327; that stretch reads TFKDETETDL…AKLRGMMPWI (146 aa). Positions 190, 194, 226, and 230 each coordinate Mg(2+). S251 contributes to the substrate binding site.

This sequence belongs to the ketol-acid reductoisomerase family. Requires Mg(2+) as cofactor.

The enzyme catalyses (2R)-2,3-dihydroxy-3-methylbutanoate + NADP(+) = (2S)-2-acetolactate + NADPH + H(+). The catalysed reaction is (2R,3R)-2,3-dihydroxy-3-methylpentanoate + NADP(+) = (S)-2-ethyl-2-hydroxy-3-oxobutanoate + NADPH + H(+). The protein operates within amino-acid biosynthesis; L-isoleucine biosynthesis; L-isoleucine from 2-oxobutanoate: step 2/4. Its pathway is amino-acid biosynthesis; L-valine biosynthesis; L-valine from pyruvate: step 2/4. Involved in the biosynthesis of branched-chain amino acids (BCAA). Catalyzes an alkyl-migration followed by a ketol-acid reduction of (S)-2-acetolactate (S2AL) to yield (R)-2,3-dihydroxy-isovalerate. In the isomerase reaction, S2AL is rearranged via a Mg-dependent methyl migration to produce 3-hydroxy-3-methyl-2-ketobutyrate (HMKB). In the reductase reaction, this 2-ketoacid undergoes a metal-dependent reduction by NADPH to yield (R)-2,3-dihydroxy-isovalerate. The chain is Ketol-acid reductoisomerase (NADP(+)) from Psychrobacter arcticus (strain DSM 17307 / VKM B-2377 / 273-4).